Reading from the N-terminus, the 886-residue chain is Isoleucine--tRNA ligase (886 aa).

A 'HIGH' region motif is present at residues 60 to 70 (PYANGDIHIGH). Position 546 (E546) interacts with L-isoleucyl-5'-AMP. The 'KMSKS' region motif lies at 587–591 (KMSKS). K590 provides a ligand contact to ATP. 4 residues coordinate Zn(2+): C856, C859, C870, and C873.

Belongs to the class-I aminoacyl-tRNA synthetase family. IleS type 1 subfamily. As to quaternary structure, monomer. Zn(2+) serves as cofactor.

It localises to the cytoplasm. It catalyses the reaction tRNA(Ile) + L-isoleucine + ATP = L-isoleucyl-tRNA(Ile) + AMP + diphosphate. Its function is as follows. Catalyzes the attachment of isoleucine to tRNA(Ile). As IleRS can inadvertently accommodate and process structurally similar amino acids such as valine, to avoid such errors it has two additional distinct tRNA(Ile)-dependent editing activities. One activity is designated as 'pretransfer' editing and involves the hydrolysis of activated Val-AMP. The other activity is designated 'posttransfer' editing and involves deacylation of mischarged Val-tRNA(Ile). The protein is Isoleucine--tRNA ligase of Mesomycoplasma hyopneumoniae (strain 232) (Mycoplasma hyopneumoniae).